Consider the following 204-residue polypeptide: Pyridoxal 5'-phosphate synthase subunit PdxT (204 aa).

52–54 (GES) serves as a coordination point for L-glutamine. Cys-84 functions as the Nucleophile in the catalytic mechanism. Residues Arg-116 and 143–144 (IR) contribute to the L-glutamine site. Active-site charge relay system residues include His-184 and Glu-186.

The protein belongs to the glutaminase PdxT/SNO family. In the presence of PdxS, forms a dodecamer of heterodimers. Only shows activity in the heterodimer.

It carries out the reaction aldehydo-D-ribose 5-phosphate + D-glyceraldehyde 3-phosphate + L-glutamine = pyridoxal 5'-phosphate + L-glutamate + phosphate + 3 H2O + H(+). It catalyses the reaction L-glutamine + H2O = L-glutamate + NH4(+). It functions in the pathway cofactor biosynthesis; pyridoxal 5'-phosphate biosynthesis. In terms of biological role, catalyzes the hydrolysis of glutamine to glutamate and ammonia as part of the biosynthesis of pyridoxal 5'-phosphate. The resulting ammonia molecule is channeled to the active site of PdxS. The sequence is that of Pyridoxal 5'-phosphate synthase subunit PdxT from Pyrobaculum arsenaticum (strain DSM 13514 / JCM 11321 / PZ6).